The following is a 206-amino-acid chain: Two-component response regulator ARR15 (206 aa).

Residues 19 to 146 enclose the Response regulatory domain; the sequence is HVLAVDDSFV…DVKRLKELIM (128 aa). Asp79 is subject to 4-aspartylphosphate. The interval 151 to 206 is disordered; that stretch reads AEEGKTKKLSPKRILQNDIDSSPSSSSTSSSSSSHDVSSLDDDTPSSKRIKLESRG. Residues 168–187 are compositionally biased toward low complexity; sequence DIDSSPSSSSTSSSSSSHDV.

This sequence belongs to the ARR family. Type-A subfamily. Post-translationally, two-component system major event consists of a His-to-Asp phosphorelay between a sensor histidine kinase (HK) and a response regulator (RR). In plants, the His-to-Asp phosphorelay involves an additional intermediate named Histidine-containing phosphotransfer protein (HPt). This multistep phosphorelay consists of a His-Asp-His-Asp sequential transfer of a phosphate group between first a His and an Asp of the HK protein, followed by the transfer to a conserved His of the HPt protein and finally the transfer to an Asp in the receiver domain of the RR protein.

The protein localises to the nucleus. Functions as a response regulator involved in His-to-Asp phosphorelay signal transduction system. Phosphorylation of the Asp residue in the receiver domain activates the ability of the protein to promote the transcription of target genes. Type-A response regulators seem to act as negative regulators of the cytokinin signaling. The protein is Two-component response regulator ARR15 (ARR15) of Arabidopsis thaliana (Mouse-ear cress).